Consider the following 259-residue polypeptide: Small ribosomal subunit protein uS2 (259 aa).

The protein belongs to the universal ribosomal protein uS2 family.

The chain is Small ribosomal subunit protein uS2 from Streptococcus pneumoniae (strain CGSP14).